Consider the following 366-residue polypeptide: Ribosomal RNA large subunit methyltransferase M (366 aa).

S-adenosyl-L-methionine contacts are provided by residues S188, 221–224, D240, D260, and D277; that span reads CPGG. Catalysis depends on K306, which acts as the Proton acceptor.

This sequence belongs to the class I-like SAM-binding methyltransferase superfamily. RNA methyltransferase RlmE family. RlmM subfamily. In terms of assembly, monomer.

It is found in the cytoplasm. It carries out the reaction cytidine(2498) in 23S rRNA + S-adenosyl-L-methionine = 2'-O-methylcytidine(2498) in 23S rRNA + S-adenosyl-L-homocysteine + H(+). Functionally, catalyzes the 2'-O-methylation at nucleotide C2498 in 23S rRNA. This chain is Ribosomal RNA large subunit methyltransferase M, found in Salmonella agona (strain SL483).